Here is a 785-residue protein sequence, read N- to C-terminus: Protein translocase subunit SecA 3 (785 aa).

ATP-binding positions include Q98, 116 to 120 (GEGKT), and D505.

This sequence belongs to the SecA family. In terms of assembly, monomer and homodimer. Part of the essential Sec protein translocation apparatus which comprises SecA, SecYEG and auxiliary proteins SecDF. Other proteins may also be involved.

It localises to the cell membrane. The protein resides in the cytoplasm. The catalysed reaction is ATP + H2O + cellular proteinSide 1 = ADP + phosphate + cellular proteinSide 2.. In terms of biological role, part of the Sec protein translocase complex. Interacts with the SecYEG preprotein conducting channel. Has a central role in coupling the hydrolysis of ATP to the transfer of proteins into and across the cell membrane, serving as an ATP-driven molecular motor driving the stepwise translocation of polypeptide chains across the membrane. This Mycolicibacterium vanbaalenii (strain DSM 7251 / JCM 13017 / BCRC 16820 / KCTC 9966 / NRRL B-24157 / PYR-1) (Mycobacterium vanbaalenii) protein is Protein translocase subunit SecA 3.